Consider the following 361-residue polypeptide: Polyribonucleotide 5'-hydroxyl-kinase PH0197 (361 aa).

43-50 (GDVDTGKT) is an ATP binding site.

Requires a divalent metal cation as cofactor.

The catalysed reaction is a 5'-end dephospho-2'-deoxyribonucleoside-DNA + ATP = a 5'-end 5'-phospho-2'-deoxyribonucleoside-DNA + ADP + H(+). It catalyses the reaction a 5'-end dephospho-ribonucleoside-RNA + ATP = a 5'-end 5'-phospho-ribonucleoside-RNA + ADP + H(+). With respect to regulation, DNA kinase activity is inhibited by 250 mM sodium chloride whereas RNA kinase activity is unaffected. Its function is as follows. Polynucleotide kinase that can phosphorylate the 5'-hydroxyl groups of both single-stranded RNA (ssRNA) and single-stranded DNA (ssDNA). Exhibits a strong preference for ssRNA. This chain is Polyribonucleotide 5'-hydroxyl-kinase PH0197, found in Pyrococcus horikoshii (strain ATCC 700860 / DSM 12428 / JCM 9974 / NBRC 100139 / OT-3).